Reading from the N-terminus, the 518-residue chain is Retinal dehydrogenase 2 (518 aa).

Residue Tyr168 is modified to Phosphotyrosine. NAD(+)-binding positions include 184 to 186 (IPW), 210 to 213 (KPAE), and 264 to 266 (STE). Glu286 serves as the catalytic Proton acceptor. Cys320 acts as the Nucleophile in catalysis. Residue Ser351 is modified to Phosphoserine. Residues 366–370 (KQYNK) and Glu417 each bind NAD(+).

This sequence belongs to the aldehyde dehydrogenase family. Homotetramer.

The protein localises to the cytoplasm. It catalyses the reaction retinal + NAD(+) + H2O = retinoate + NADH + 2 H(+). The catalysed reaction is all-trans-retinal + NAD(+) + H2O = all-trans-retinoate + NADH + 2 H(+). It carries out the reaction all-trans-13,14-dihydroretinal + NAD(+) + H2O = all-trans-13,14-dihydroretinoate + NADH + 2 H(+). The protein operates within cofactor metabolism; retinol metabolism. In terms of biological role, catalyzes the NAD-dependent oxidation of aldehyde substrates, such as all-trans-retinal and all-trans-13,14-dihydroretinal, to their corresponding carboxylic acids, all-trans-retinoate and all-trans-13,14-dihydroretinoate, respectively. Retinoate signaling is critical for the transcriptional control of many genes, for instance it is crucial for initiation of meiosis in both male and female. Recognizes retinal as substrate, both in its free form and when bound to cellular retinol-binding protein. Lacks activity with benzaldehyde, acetaldehyde and octanal. Displays complete lack of activity with citral. The sequence is that of Retinal dehydrogenase 2 (Aldh1a2) from Mus musculus (Mouse).